We begin with the raw amino-acid sequence, 574 residues long: Pyruvate kinase PKLR (574 aa).

Phosphoserine occurs at positions 2, 19, 26, and 43. Residue Arg116 participates in substrate binding. The K(+) site is built by Asn118, Ser120, Asp156, and Thr157. 118–121 (NFSH) is an ATP binding site. 2 residues coordinate ATP: Arg163 and Lys250. Ser292 bears the Phosphoserine mark. Residue Lys313 coordinates substrate. Glu315 provides a ligand contact to Mn(2+). Positions 338, 339, and 371 each coordinate substrate. Residue Asp339 coordinates Mn(2+). Beta-D-fructose 1,6-bisphosphate-binding positions include 475–480 (TKTGRS), Trp525, Arg532, and 559–564 (RPGSGY).

It belongs to the pyruvate kinase family. In terms of assembly, homotetramer. It depends on Mg(2+) as a cofactor. Mn(2+) serves as cofactor. Requires K(+) as cofactor.

It catalyses the reaction pyruvate + ATP = phosphoenolpyruvate + ADP + H(+). It functions in the pathway carbohydrate degradation; glycolysis; pyruvate from D-glyceraldehyde 3-phosphate: step 5/5. Its activity is regulated as follows. Allosterically activated by fructose 1,6-bisphosphate. Functionally, pyruvate kinase that catalyzes the conversion of phosphoenolpyruvate to pyruvate with the synthesis of ATP, and which plays a key role in glycolysis. The polypeptide is Pyruvate kinase PKLR (Pklr) (Rattus norvegicus (Rat)).